The sequence spans 306 residues: tRNA pseudouridine synthase B (306 aa).

D48 serves as the catalytic Nucleophile.

It belongs to the pseudouridine synthase TruB family. Type 1 subfamily.

It carries out the reaction uridine(55) in tRNA = pseudouridine(55) in tRNA. Its function is as follows. Responsible for synthesis of pseudouridine from uracil-55 in the psi GC loop of transfer RNAs. The polypeptide is tRNA pseudouridine synthase B (Haemophilus influenzae (strain 86-028NP)).